A 957-amino-acid polypeptide reads, in one-letter code: SH3 domain-binding protein 4 (957 aa).

An SH3 1 domain is found at 54-113 (DNVKEVVAIKDYCPNNFTTLKFSKGEHLYVLDTSGGEWWYAHNTTEMGYIPSSYVQPLNY). One can recognise a ZU5 domain in the interval 312–449 (TSIVCRLDSS…LEPVMYVVMV (138 aa)). In terms of domain architecture, SH3 2 spans 649–719 (TSLKYGKLLK…HAKNVLVVGK (71 aa)).

Homodimer or homooligomer.

Its subcellular location is the membrane. It is found in the clathrin-coated pit. It localises to the cytoplasmic vesicle. The protein resides in the clathrin-coated vesicle. The protein localises to the nucleus. Functionally, possible role in regulating endocytosis of the transferrin receptor at the plasma membrane. Alternatively, may function as a negative regulator of the amino acid-induced TOR signaling by inhibiting the formation of active Rag GTPase complexes. Preferentially binds inactive Rag GTPase complexes and prevents their interaction with the mTORC1 complex inhibiting its relocalization to lysosomes and its activation. Thereby, may indirectly regulate cell growth, proliferation and autophagy. This Xenopus tropicalis (Western clawed frog) protein is SH3 domain-binding protein 4 (sh3bp4).